The primary structure comprises 399 residues: Enoyl-[acyl-carrier-protein] reductase [NADH] (399 aa).

Residues 49–54 (GASSGY), 75–76 (FE), 112–113 (DA), and 141–142 (LA) each bind NAD(+). Y227 serves as a coordination point for substrate. Y237 functions as the Proton donor in the catalytic mechanism. NAD(+)-binding positions include K246 and 272–274 (VVT).

Belongs to the TER reductase family. Monomer.

The enzyme catalyses a 2,3-saturated acyl-[ACP] + NAD(+) = a (2E)-enoyl-[ACP] + NADH + H(+). The protein operates within lipid metabolism; fatty acid biosynthesis. In terms of biological role, involved in the final reduction of the elongation cycle of fatty acid synthesis (FAS II). Catalyzes the reduction of a carbon-carbon double bond in an enoyl moiety that is covalently linked to an acyl carrier protein (ACP). This Pseudomonas putida (strain W619) protein is Enoyl-[acyl-carrier-protein] reductase [NADH].